A 977-amino-acid polypeptide reads, in one-letter code: Ubiquitin-like modifier-activating enzyme 7 (977 aa).

This sequence belongs to the ubiquitin-activating E1 family. Post-translationally, ubiquitinated by RNF170.

The protein localises to the cytoplasm. It localises to the nucleus. The protein operates within protein modification; protein ubiquitination. Functionally, E1-activating enzyme that catalyzes the covalent conjugation of the ubiquitin-like protein product of ISG15 to additional interferons stimulated proteins (ISGs) as well as other cellular proteins such as P53 in a process termed protein ISGylation. Plays an essential role in antiviral immunity together with ISG15 by restricting the replication of many viruses including rabies virus, influenza virus, sindbis virus or rotavirus. This chain is Ubiquitin-like modifier-activating enzyme 7, found in Mus musculus (Mouse).